We begin with the raw amino-acid sequence, 153 residues long: Small ribosomal subunit protein uS9 (153 aa).

Residues 1 to 19 (MTAPADEAPAVEDAPVAED) show a composition bias toward low complexity. 2 disordered regions span residues 1 to 23 (MTAPADEAPAVEDAPVAEDIAPV) and 121 to 153 (LKKAGMLTRDSREKERKKYGLKKARKAPQYSKR). The segment covering 129–138 (RDSREKERKK) has biased composition (basic and acidic residues). Positions 139-153 (YGLKKARKAPQYSKR) are enriched in basic residues.

It belongs to the universal ribosomal protein uS9 family.

The protein is Small ribosomal subunit protein uS9 of Saccharopolyspora erythraea (strain ATCC 11635 / DSM 40517 / JCM 4748 / NBRC 13426 / NCIMB 8594 / NRRL 2338).